A 275-amino-acid polypeptide reads, in one-letter code: Subtilisin (275 aa).

Residue Q2 participates in Ca(2+) binding. Residues 5–274 enclose the Peptidase S8 domain; it reads PYGISQIKAP…KGLINVQAAA (270 aa). D32 functions as the Charge relay system in the catalytic mechanism. D41 lines the Ca(2+) pocket. H64 functions as the Charge relay system in the catalytic mechanism. Ca(2+) contacts are provided by L75, N77, I79, V81, A169, Y171, and T174. The active-site Charge relay system is the S221.

This sequence belongs to the peptidase S8 family. Requires Ca(2+) as cofactor.

Its subcellular location is the secreted. The enzyme catalyses Hydrolysis of proteins with broad specificity for peptide bonds, and a preference for a large uncharged residue in P1. Hydrolyzes peptide amides.. Subtilisin is an extracellular alkaline serine protease, it catalyzes the hydrolysis of proteins and peptide amides. The sequence is that of Subtilisin (apr) from Bacillus pumilus (Bacillus mesentericus).